The primary structure comprises 446 residues: Cyclin-F2-2 (446 aa).

The interval Tyr-191–Asp-216 is disordered.

Belongs to the cyclin family. Cyclin F subfamily.

The polypeptide is Cyclin-F2-2 (CYCF2-2) (Oryza sativa subsp. japonica (Rice)).